We begin with the raw amino-acid sequence, 186 residues long: Tumor necrosis factor alpha-induced protein 8-like protein 1 (186 aa).

Positions 37-70 (EVLDELYRVTKEYTRNRKEAQKIIKNLIKMVVKL) form a coiled coil.

This sequence belongs to the TNFAIP8 family.

The protein localises to the cytoplasm. This Danio rerio (Zebrafish) protein is Tumor necrosis factor alpha-induced protein 8-like protein 1 (tnfaip8l1).